The following is a 372-amino-acid chain: N-methyl-L-tryptophan oxidase (372 aa).

FAD is bound at residue 4–34; that stretch reads DLIIIGSGSVGAAAGYYATRAGLKVLMTDAH. Cys307 carries the S-8alpha-FAD cysteine modification.

The protein belongs to the MSOX/MTOX family. MTOX subfamily. As to quaternary structure, monomer. FAD is required as a cofactor.

It catalyses the reaction N(alpha)-methyl-L-tryptophan + O2 + H2O = L-tryptophan + formaldehyde + H2O2. In terms of biological role, catalyzes the oxidative demethylation of N-methyl-L-tryptophan. The polypeptide is N-methyl-L-tryptophan oxidase (Citrobacter koseri (strain ATCC BAA-895 / CDC 4225-83 / SGSC4696)).